A 530-amino-acid chain; its full sequence is Glucose-6-phosphate isomerase (530 aa).

Catalysis depends on E335, which acts as the Proton donor. Catalysis depends on residues H366 and K495.

The protein belongs to the GPI family.

It localises to the cytoplasm. It carries out the reaction alpha-D-glucose 6-phosphate = beta-D-fructose 6-phosphate. It participates in carbohydrate biosynthesis; gluconeogenesis. Its pathway is carbohydrate degradation; glycolysis; D-glyceraldehyde 3-phosphate and glycerone phosphate from D-glucose: step 2/4. In terms of biological role, catalyzes the reversible isomerization of glucose-6-phosphate to fructose-6-phosphate. The chain is Glucose-6-phosphate isomerase from Roseobacter denitrificans (strain ATCC 33942 / OCh 114) (Erythrobacter sp. (strain OCh 114)).